Reading from the N-terminus, the 565-residue chain is Putative serine protease pcp-1 (565 aa).

A signal peptide spans 1 to 17 (MRWFLVLLLVALVSVEA). Residues N69, N107, and N126 are each glycosylated (N-linked (GlcNAc...) asparagine). The Charge relay system role is filled by S177. Residues N240, N244, N257, N271, N319, and N347 are each glycosylated (N-linked (GlcNAc...) asparagine). Residues D451 and H479 each act as charge relay system in the active site.

This sequence belongs to the peptidase S28 family.

The chain is Putative serine protease pcp-1 (pcp-1) from Caenorhabditis elegans.